The chain runs to 139 residues: MASQFELSVVSAEKEIFNGNVVSVRVSGIDGELGVYAGHTPLLTSIKPGMVKYTLENGKEEFIYVSGGFLEVQPTIVTVLADVAIRGEELDQQRILAAKRKAEDTLSKSNNAELSAKLSREIAKLRVYEIVNSKLANRR.

It belongs to the ATPase epsilon chain family. In terms of assembly, F-type ATPases have 2 components, CF(1) - the catalytic core - and CF(0) - the membrane proton channel. CF(1) has five subunits: alpha(3), beta(3), gamma(1), delta(1), epsilon(1). CF(0) has three main subunits: a, b and c.

Its subcellular location is the cell inner membrane. Its function is as follows. Produces ATP from ADP in the presence of a proton gradient across the membrane. In Actinobacillus pleuropneumoniae serotype 5b (strain L20), this protein is ATP synthase epsilon chain.